The sequence spans 232 residues: Sugar fermentation stimulation protein homolog (232 aa).

Belongs to the SfsA family.

This chain is Sugar fermentation stimulation protein homolog, found in Geobacter metallireducens (strain ATCC 53774 / DSM 7210 / GS-15).